A 288-amino-acid polypeptide reads, in one-letter code: MKFLLAFSLLIPSVVFASSSKFQQVEQDVKAIEVSLSARIGVSVLDTQNGEYWDYNGNQRFPLTSTFKTIACAKLLYDAEQGKVNPNSTVEIKKADLVTYSPVIEKQVGQAITLDDACFATMTTSDNTAANIILSAVGGPKGVTDFLRQIGDKETRLDRIEPDLNEGKLGDLRDTTTPKAIASTLNKLLFGSALSEMNQKKLESWMVNNQVTGNLLRSVLPAGWNIADRSGAGGFGARSITAVVWSEHQAPIIVSIYLAQTQASMAERNDAIVKIGHSIFDVYTSQSR.

Residues 1 to 17 (MKFLLAFSLLIPSVVFA) form the signal peptide. Ser-65 (acyl-ester intermediate) is an active-site residue. Cys-72 and Cys-118 are joined by a disulfide. 229–231 (RSG) contacts substrate.

This sequence belongs to the class-A beta-lactamase family.

The catalysed reaction is a beta-lactam + H2O = a substituted beta-amino acid. Functionally, hydrolyzes both carbenicillin and oxacillin. The protein is Beta-lactamase CARB-3 (carB3) of Pseudomonas aeruginosa.